The chain runs to 196 residues: Imidazoleglycerol-phosphate dehydratase (196 aa).

Belongs to the imidazoleglycerol-phosphate dehydratase family.

The protein resides in the cytoplasm. The enzyme catalyses D-erythro-1-(imidazol-4-yl)glycerol 3-phosphate = 3-(imidazol-4-yl)-2-oxopropyl phosphate + H2O. It participates in amino-acid biosynthesis; L-histidine biosynthesis; L-histidine from 5-phospho-alpha-D-ribose 1-diphosphate: step 6/9. The chain is Imidazoleglycerol-phosphate dehydratase from Granulibacter bethesdensis (strain ATCC BAA-1260 / CGDNIH1).